The chain runs to 209 residues: Glycerol-3-phosphate acyltransferase (209 aa).

A run of 5 helical transmembrane segments spans residues Ile5 to Gly25, Leu50 to Ala70, Tyr74 to Gly94, Ile115 to Leu135, and Ala151 to Leu171.

Belongs to the PlsY family. Probably interacts with PlsX.

The protein resides in the cell membrane. The enzyme catalyses an acyl phosphate + sn-glycerol 3-phosphate = a 1-acyl-sn-glycero-3-phosphate + phosphate. It participates in lipid metabolism; phospholipid metabolism. Functionally, catalyzes the transfer of an acyl group from acyl-phosphate (acyl-PO(4)) to glycerol-3-phosphate (G3P) to form lysophosphatidic acid (LPA). This enzyme utilizes acyl-phosphate as fatty acyl donor, but not acyl-CoA or acyl-ACP. In Limosilactobacillus reuteri (strain DSM 20016) (Lactobacillus reuteri), this protein is Glycerol-3-phosphate acyltransferase.